An 891-amino-acid polypeptide reads, in one-letter code: MYKSIDVVRQEFLDFFHKQEHQVVPSSSLVPKNDQTLLFTNSGMNQFKDIFLGLVKPSYKRVVTAQRCMRAGGKHNDLNNVGYTECHLTFFEMLGNFSFGDYFKDDAIQFAWELLTDSNWFGLSKDKIWVTTHIEDDESYNIWVKQVGISTKRIVKIGNKNSDLYDSDNFWQMGNIGPCGPCSEIFYDFGSDLKGKPPGYMQGLGSRYIEIWNLVFMQFNRQLNDRLIDLPMLSVDTGMGLERITAILQGVHSNYLIDVFKNLIVDISNIMKVKEYINNRSLYVIADHIRACVFLIKDGVVPSNEGQGYVLRRIIRRSVRHGRKLGVNDIFLYKLVNLVIVHMNYVSNILYDQKDLIEQILFNEEKLFNNTLKKGLELLEKSLKNLNQDKILSGEIAFQLYTTYGFPLELTKDICCERNIKVDQLEFDQIMLTERRNSKRLSQFHKNFNNIILSSYAKTSTFVGYKCFSCQSKIIALLQDNELINKMCDVDQESMVILDITPFYGESGGQIGDSGYLKGECGVFKVKNTKKYGQIIVHIGVLISGIFLIGEQVFAQVNRLKRKDISVNHSSTHLLHSALLKILGSHVTQQGSLINDKYFRFDFSHYNAITITQINEVENLINQQIWDNLLVTENIMLMESARNIGAIMLLHKQYTEKVRVIQIGDCSIELCGGTHVSNTNEIGLFIITKEFGIGSGVRRIEAVTKNAALSVIQNKKKLIQNIAQIAQSDDVNLLNVIHEFKARYEKLDREIKLLNSKQEIQKVLSLVREVYYIKNVRVLVNHVKNMESSSLFKMVKLLKHYLQSGIVVLINIRKNNIAHIVISITKDLVECNRIYAIDLIQYIIRSVKNGKGGGRFDFAQLNINNVKNVSELVIQIQSLLNDIICNIKSIK.

Zn(2+) is bound by residues H569, H573, C671, and H675.

It belongs to the class-II aminoacyl-tRNA synthetase family. As to quaternary structure, homotetramer. Zn(2+) is required as a cofactor.

Its subcellular location is the cytoplasm. It catalyses the reaction tRNA(Ala) + L-alanine + ATP = L-alanyl-tRNA(Ala) + AMP + diphosphate. Catalyzes the attachment of alanine to tRNA(Ala) in a two-step reaction: alanine is first activated by ATP to form Ala-AMP and then transferred to the acceptor end of tRNA(Ala). Also edits incorrectly charged Ser-tRNA(Ala) and Gly-tRNA(Ala) via its editing domain. The polypeptide is Alanine--tRNA ligase (Blochmanniella floridana).